A 386-amino-acid polypeptide reads, in one-letter code: Histidine decarboxylase (386 aa).

H120 provides a ligand contact to substrate. N6-(pyridoxal phosphate)lysine is present on K233.

The protein belongs to the group II decarboxylase family. Homotetramer. Pyridoxal 5'-phosphate is required as a cofactor.

It carries out the reaction L-histidine + H(+) = histamine + CO2. It participates in siderophore biosynthesis; anguibactin biosynthesis. This is Histidine decarboxylase from Vibrio anguillarum (strain ATCC 68554 / 775) (Listonella anguillarum).